The following is a 502-amino-acid chain: ATP synthase subunit alpha (502 aa).

Residue 169 to 176 (GDRQTGKT) coordinates ATP.

This sequence belongs to the ATPase alpha/beta chains family. F-type ATPases have 2 components, CF(1) - the catalytic core - and CF(0) - the membrane proton channel. CF(1) has five subunits: alpha(3), beta(3), gamma(1), delta(1), epsilon(1). CF(0) has three main subunits: a(1), b(2) and c(9-12). The alpha and beta chains form an alternating ring which encloses part of the gamma chain. CF(1) is attached to CF(0) by a central stalk formed by the gamma and epsilon chains, while a peripheral stalk is formed by the delta and b chains.

It is found in the cell membrane. It carries out the reaction ATP + H2O + 4 H(+)(in) = ADP + phosphate + 5 H(+)(out). Functionally, produces ATP from ADP in the presence of a proton gradient across the membrane. The alpha chain is a regulatory subunit. This is ATP synthase subunit alpha from Streptococcus pyogenes serotype M18 (strain MGAS8232).